The following is a 233-amino-acid chain: MVKFIALITAAGSGSRMGEDIPKQYRPLAGKPMIYHALRTLCGIARISTVCIVLAPEDTEWIRHNWREFAGKIQIFNCGGATRAESVTNGLKALRAANHVQDQDWILVHDAARPGLSTTLVERLLDQLADDEVGGLLAVPLADTLKRADDAGRVICTEPRERLWQAQTPQMFRMKLLLEALEKAPAGITDDASAVEALGLSPKLVVGNAYNFKVTYPQDLKLAELILRERAIT.

The protein belongs to the IspD/TarI cytidylyltransferase family. IspD subfamily.

It carries out the reaction 2-C-methyl-D-erythritol 4-phosphate + CTP + H(+) = 4-CDP-2-C-methyl-D-erythritol + diphosphate. It functions in the pathway isoprenoid biosynthesis; isopentenyl diphosphate biosynthesis via DXP pathway; isopentenyl diphosphate from 1-deoxy-D-xylulose 5-phosphate: step 2/6. In terms of biological role, catalyzes the formation of 4-diphosphocytidyl-2-C-methyl-D-erythritol from CTP and 2-C-methyl-D-erythritol 4-phosphate (MEP). This Nitrosomonas eutropha (strain DSM 101675 / C91 / Nm57) protein is 2-C-methyl-D-erythritol 4-phosphate cytidylyltransferase.